Consider the following 2748-residue polypeptide: Nuclear migration protein NUM1 (2748 aa).

Over residues 1–10 (MSHNNRHKKN) the composition is skewed to basic residues. 2 disordered regions span residues 1–36 (MSHN…VSTN) and 290–312 (YYQK…GTTS). The span at 17-36 (AGQYANSIDNSLSQESVSTN) shows a compositional bias: polar residues. Low complexity predominate over residues 293–304 (KQHTSDTTVTSD). Tandem repeats lie at residues 593-656 (PSLE…KLEQ), 657-727 (PSLE…EVEQ), 728-798 (PSLA…EVEQ), 799-862 (PSLA…KLEQ), 863-926 (PSLA…KLEQ), 927-990 (PSLA…KLEQ), 991-1054 (PSLE…KLEQ), 1055-1118 (PSLE…KLEQ), 1119-1182 (PSLE…KLEQ), 1183-1246 (PSLA…KLEQ), 1247-1310 (PSLA…KLEQ), and 1311-1374 (PSLE…KLEQ). Residues 593–1384 (PSLEYLVEHA…PSLEYLVKHA (792 aa)) form a 13 X tandem repeats region. Ser-611, Ser-675, and Ser-746 each carry phosphoserine. A phosphoserine mark is found at Ser-881, Ser-945, and Ser-1009. Phosphoserine is present on residues Ser-1201, Ser-1265, and Ser-1329. Residues 1375-1384 (PSLEYLVKHA) form a 13; truncated repeat. The interval 2111 to 2133 (ERAERIDEQSINTTSSNSTTTSS) is disordered. A compositionally biased stretch (low complexity) spans 2122–2133 (NTTSSNSTTTSS). Residues Ser-2162, Ser-2164, Ser-2197, Ser-2217, Ser-2220, Ser-2221, Ser-2360, and Ser-2424 each carry the phosphoserine modification. Positions 2444-2460 (KEDKKGQATASKHEYVS) are enriched in basic and acidic residues. Residues 2444–2536 (KEDKKGQATA…HSSRNTPASR (93 aa)) are disordered. Over residues 2465 to 2474 (NKTSTVSTKS) the composition is skewed to polar residues. Basic and acidic residues predominate over residues 2492-2503 (SESHPQIEEQSH). The residue at position 2494 (Ser-2494) is a Phosphoserine. The segment covering 2504-2514 (RTNHHKHHKRQ) has biased composition (basic residues). Residues 2516 to 2532 (SLNSNSTSKTTHSSRNT) show a composition bias toward low complexity. Residue Ser-2545 is modified to Phosphoserine. Residues 2573–2683 (QTVIGEYLFK…WYNSLRYLLQ (111 aa)) form the PH domain. The disordered stretch occupies residues 2707–2748 (IFPLPGENTKSSSKRLSASRRSVSTRSLRHRVPQSRSFGNLR). The segment covering 2720–2730 (KRLSASRRSVS) has biased composition (low complexity).

As to quaternary structure, interacts with PAC11 when DYN1 is present, and TUB3.

It localises to the bud tip. Controls nuclear migration. NUM1 specifically controls the interaction of the bud neck cytoskeleton with the pre-divisional G2 nucleus. Functions in dynein-anchoring. During late anaphase forms dynein-interacting cortical microtubule capture sites at both cellular poles. This leads to dynein-dependent sliding of the microtubules in the bud. This chain is Nuclear migration protein NUM1 (NUM1), found in Saccharomyces cerevisiae (strain ATCC 204508 / S288c) (Baker's yeast).